The sequence spans 508 residues: Maturase K (508 aa).

It belongs to the intron maturase 2 family. MatK subfamily.

Its subcellular location is the plastid. The protein resides in the chloroplast. Its function is as follows. Usually encoded in the trnK tRNA gene intron. Probably assists in splicing its own and other chloroplast group II introns. The protein is Maturase K of Verbena rigida (Tuberous vervain).